The following is a 50-amino-acid chain: Monellin chain B (50 aa).

Heterodimer of an A chain and a B chain.

Taste-modifying protein; intensely sweet-tasting protein. The chain is Monellin chain B from Dioscoreophyllum cumminsii (Serendipity berry).